Consider the following 344-residue polypeptide: Acireductone dioxygenase (344 aa).

Residues H92, H94, E98, and H137 each coordinate Fe(2+). Residues H92, H94, E98, and H137 each contribute to the Ni(2+) site.

It belongs to the acireductone dioxygenase (ARD) family. It depends on Fe(2+) as a cofactor. Ni(2+) serves as cofactor.

It localises to the cytoplasm. Its subcellular location is the nucleus. It catalyses the reaction 1,2-dihydroxy-5-(methylsulfanyl)pent-1-en-3-one + O2 = 4-methylsulfanyl-2-oxobutanoate + formate + 2 H(+). The enzyme catalyses 1,2-dihydroxy-5-(methylsulfanyl)pent-1-en-3-one + O2 = 3-(methylsulfanyl)propanoate + CO + formate + 2 H(+). Its pathway is amino-acid biosynthesis; L-methionine biosynthesis via salvage pathway; L-methionine from S-methyl-5-thio-alpha-D-ribose 1-phosphate: step 5/6. Catalyzes 2 different reactions between oxygen and the acireductone 1,2-dihydroxy-3-keto-5-methylthiopentene (DHK-MTPene) depending upon the metal bound in the active site. Fe-containing acireductone dioxygenase (Fe-ARD) produces formate and 2-keto-4-methylthiobutyrate (KMTB), the alpha-ketoacid precursor of methionine in the methionine recycle pathway. Ni-containing acireductone dioxygenase (Ni-ARD) produces methylthiopropionate, carbon monoxide and formate, and does not lie on the methionine recycle pathway. This Leishmania major protein is Acireductone dioxygenase.